The following is a 354-amino-acid chain: Serum paraoxonase/lactonase 3 (354 aa).

A disulfide bridge connects residues Cys42 and Cys352. Asn50 carries N-linked (GlcNAc...) asparagine glycosylation. Ca(2+)-binding residues include Glu53 and Asp54. His114 serves as the catalytic Proton acceptor. Ile116 serves as a coordination point for Ca(2+). At Ser165 the chain carries Phosphoserine. Residues Asn167, Asp168, Asn223, Asp268, and Asn269 each coordinate Ca(2+). 2 N-linked (GlcNAc...) asparagine glycosylation sites follow: Asn269 and Asn323.

Belongs to the paraoxonase family. Homodimer. Requires Ca(2+) as cofactor. Post-translationally, glycosylated. In terms of processing, the signal sequence is not cleaved.

Its subcellular location is the secreted. It localises to the extracellular space. It catalyses the reaction a phenyl acetate + H2O = a phenol + acetate + H(+). The catalysed reaction is An aryl dialkyl phosphate + H2O = dialkyl phosphate + an aryl alcohol.. It carries out the reaction an N-acyl-L-homoserine lactone + H2O = an N-acyl-L-homoserine + H(+). Functionally, has low activity towards the organophosphate paraxon and aromatic carboxylic acid esters. Rapidly hydrolyzes lactones such as statin prodrugs (e.g. lovastatin). Hydrolyzes aromatic lactones and 5- or 6-member ring lactones with aliphatic substituents but not simple lactones or those with polar substituents. The chain is Serum paraoxonase/lactonase 3 (Pon3) from Mus musculus (Mouse).